We begin with the raw amino-acid sequence, 537 residues long: Eukaryotic translation initiation factor 3 subunit L (537 aa).

Over residues 1–19 the composition is skewed to basic and acidic residues; it reads MSRRVEFDMSHEDHTDRRR. Residues 1–28 are disordered; sequence MSRRVEFDMSHEDHTDRRRTNTFSSEED. One can recognise a PCI domain in the interval 297 to 485; the sequence is EATKMFVNCL…GPSTVDDDEP (189 aa).

It belongs to the eIF-3 subunit L family. Component of the eukaryotic translation initiation factor 3 (eIF-3) complex.

Its subcellular location is the cytoplasm. In terms of biological role, component of the eukaryotic translation initiation factor 3 (eIF-3) complex, which is involved in protein synthesis of a specialized repertoire of mRNAs and, together with other initiation factors, stimulates binding of mRNA and methionyl-tRNAi to the 40S ribosome. The eIF-3 complex specifically targets and initiates translation of a subset of mRNAs involved in cell proliferation. This is Eukaryotic translation initiation factor 3 subunit L from Caenorhabditis briggsae.